We begin with the raw amino-acid sequence, 119 residues long: uncharacterized protein (119 aa).

This is an uncharacterized protein from Escherichia coli O157:H7.